Reading from the N-terminus, the 91-residue chain is Large ribosomal subunit protein bL31B (91 aa).

This sequence belongs to the bacterial ribosomal protein bL31 family. Type B subfamily. As to quaternary structure, part of the 50S ribosomal subunit.

This chain is Large ribosomal subunit protein bL31B, found in Neisseria gonorrhoeae (strain ATCC 700825 / FA 1090).